Reading from the N-terminus, the 137-residue chain is Golgin subfamily A member 7 (137 aa).

Residues cysteine 69 and cysteine 72 are each lipidated (S-palmitoyl cysteine).

The protein belongs to the ERF4 family. Interacts with GOLGA3. Interacts with ZDHHC9. Palmitoylated on Cys-69 and Cys-72; which is required for Golgi localization and interaction with GOLGA3.

It localises to the golgi apparatus membrane. Functionally, may be involved in protein transport from Golgi to cell surface. The ZDHHC9-GOLGA7 complex is a palmitoyltransferase specific for HRAS and NRAS. The chain is Golgin subfamily A member 7 (GOLGA7) from Bos taurus (Bovine).